The sequence spans 296 residues: Putative methyltransferase HI_1523 (296 aa).

The protein belongs to the N(4)/N(6)-methyltransferase family.

This Haemophilus influenzae (strain ATCC 51907 / DSM 11121 / KW20 / Rd) protein is Putative methyltransferase HI_1523.